The following is a 438-amino-acid chain: Glucose-6-phosphate isomerase (438 aa).

The active-site Proton donor is the Glu-289. Active-site residues include His-310 and Lys-424.

It belongs to the GPI family.

The protein localises to the cytoplasm. The enzyme catalyses alpha-D-glucose 6-phosphate = beta-D-fructose 6-phosphate. It functions in the pathway carbohydrate biosynthesis; gluconeogenesis. The protein operates within carbohydrate degradation; glycolysis; D-glyceraldehyde 3-phosphate and glycerone phosphate from D-glucose: step 2/4. Its function is as follows. Catalyzes the reversible isomerization of glucose-6-phosphate to fructose-6-phosphate. The chain is Glucose-6-phosphate isomerase from Oenococcus oeni (strain ATCC BAA-331 / PSU-1).